Here is a 683-residue protein sequence, read N- to C-terminus: Long-chain-fatty-acid--CoA ligase 5 (683 aa).

A helical; Signal-anchor for type III membrane protein membrane pass occupies residues 12–32; the sequence is LPTPALICILTFGAAIFLWLI. I32 carries the post-translational modification Phosphoserine. At 33–683 the chain is on the cytoplasmic side; that stretch reads TRPQPVLPLL…IDSLYEHIQD (651 aa). K361 carries the post-translational modification N6-acetyllysine.

This sequence belongs to the ATP-dependent AMP-binding enzyme family. Mg(2+) serves as cofactor.

The protein localises to the mitochondrion. It localises to the endoplasmic reticulum. It is found in the mitochondrion outer membrane. Its subcellular location is the endoplasmic reticulum membrane. The protein resides in the cell membrane. It catalyses the reaction a long-chain fatty acid + ATP + CoA = a long-chain fatty acyl-CoA + AMP + diphosphate. The catalysed reaction is (5Z,8Z,11Z,14Z)-eicosatetraenoate + ATP + CoA = (5Z,8Z,11Z,14Z)-eicosatetraenoyl-CoA + AMP + diphosphate. The enzyme catalyses hexadecanoate + ATP + CoA = hexadecanoyl-CoA + AMP + diphosphate. It carries out the reaction (E)-hexadec-2-enoate + ATP + CoA = (2E)-hexadecenoyl-CoA + AMP + diphosphate. It catalyses the reaction 15-hydroxy-(5Z,8Z,11Z,13E)-eicosatetraenoate + ATP + CoA = 15-hydroxy-(5Z,8Z,11Z,13E)-eicosatetraenoyl-CoA + AMP + diphosphate. The catalysed reaction is 12-hydroxy-(5Z,8Z,10E,14Z)-eicosatetraenoate + ATP + CoA = 12-hydroxy-(5Z,8Z,10E,14Z)-eicosatetraenoyl-CoA + AMP + diphosphate. The enzyme catalyses 5-hydroxy-(6E,8Z,11Z,14Z)-eicosatetraenoate + ATP + CoA = 5-hydroxy-(6E,8Z,11Z,14Z)-eicosatetraenoyl-CoA + AMP + diphosphate. It carries out the reaction 14,15-epoxy-(5Z,8Z,11Z)-eicosatrienoate + ATP + CoA = 14,15-epoxy-(5Z,8Z,11Z)-eicosatrienoyl-CoA + AMP + diphosphate. It catalyses the reaction 11,12-epoxy-(5Z,8Z,14Z)-eicosatrienoate + ATP + CoA = 11,12-epoxy-(5Z,8Z,14Z)-eicosatrienoyl-CoA + AMP + diphosphate. The catalysed reaction is (9Z)-octadecenoate + ATP + CoA = (9Z)-octadecenoyl-CoA + AMP + diphosphate. Catalyzes the conversion of long-chain fatty acids to their active form acyl-CoAs for both synthesis of cellular lipids, and degradation via beta-oxidation. ACSL5 may activate fatty acids from exogenous sources for the synthesis of triacylglycerol destined for intracellular storage. Utilizes a wide range of saturated fatty acids with a preference for C16-C18 unsaturated fatty acids. It was suggested that it may also stimulate fatty acid oxidation. At the villus tip of the crypt-villus axis of the small intestine may sensitize epithelial cells to apoptosis specifically triggered by the death ligand TRAIL. May have a role in the survival of glioma cells. The sequence is that of Long-chain-fatty-acid--CoA ligase 5 from Homo sapiens (Human).